Here is a 248-residue protein sequence, read N- to C-terminus: Probable transcriptional regulatory protein PP_1214 (248 aa).

Positions M1–R21 are disordered.

The protein belongs to the TACO1 family.

Its subcellular location is the cytoplasm. This Pseudomonas putida (strain ATCC 47054 / DSM 6125 / CFBP 8728 / NCIMB 11950 / KT2440) protein is Probable transcriptional regulatory protein PP_1214.